Reading from the N-terminus, the 940-residue chain is UvrABC system protein A (940 aa).

31 to 38 (GLSGSGKS) contributes to the ATP binding site. The segment at 253–280 (CPICGYSMRELEPRLFSFNNPAGACPTC) adopts a C4-type zinc-finger fold. ABC transporter domains follow at residues 310–587 (WDRR…PESL) and 607–937 (ANPE…RFLK). 640–647 (GVSGSGKS) contacts ATP. The C4-type zinc finger occupies 740 to 766 (CEACQGDGVIKVEMHFLPDIYVPCDQC).

It belongs to the ABC transporter superfamily. UvrA family. In terms of assembly, forms a heterotetramer with UvrB during the search for lesions.

It is found in the cytoplasm. Its function is as follows. The UvrABC repair system catalyzes the recognition and processing of DNA lesions. UvrA is an ATPase and a DNA-binding protein. A damage recognition complex composed of 2 UvrA and 2 UvrB subunits scans DNA for abnormalities. When the presence of a lesion has been verified by UvrB, the UvrA molecules dissociate. The protein is UvrABC system protein A of Escherichia coli O6:H1 (strain CFT073 / ATCC 700928 / UPEC).